Here is a 124-residue protein sequence, read N- to C-terminus: Large ribosomal subunit protein bL12 (124 aa).

The protein belongs to the bacterial ribosomal protein bL12 family. In terms of assembly, homodimer. Part of the ribosomal stalk of the 50S ribosomal subunit. Forms a multimeric L10(L12)X complex, where L10 forms an elongated spine to which 2 to 4 L12 dimers bind in a sequential fashion. Binds GTP-bound translation factors.

In terms of biological role, forms part of the ribosomal stalk which helps the ribosome interact with GTP-bound translation factors. Is thus essential for accurate translation. This Janthinobacterium sp. (strain Marseille) (Minibacterium massiliensis) protein is Large ribosomal subunit protein bL12.